The following is a 186-amino-acid chain: dCTP deaminase (186 aa).

107–112 provides a ligand contact to dCTP; that stretch reads KSTYAR. Glu-133 acts as the Proton donor/acceptor in catalysis. Gln-152, Tyr-166, and Gln-176 together coordinate dCTP.

This sequence belongs to the dCTP deaminase family. In terms of assembly, homotrimer.

It catalyses the reaction dCTP + H2O + H(+) = dUTP + NH4(+). It participates in pyrimidine metabolism; dUMP biosynthesis; dUMP from dCTP (dUTP route): step 1/2. Functionally, catalyzes the deamination of dCTP to dUTP. In Campylobacter jejuni subsp. doylei (strain ATCC BAA-1458 / RM4099 / 269.97), this protein is dCTP deaminase.